A 334-amino-acid polypeptide reads, in one-letter code: Nucleoid-associated protein YejK (334 aa).

This sequence belongs to the YejK family.

The protein resides in the cytoplasm. The protein localises to the nucleoid. This Escherichia fergusonii (strain ATCC 35469 / DSM 13698 / CCUG 18766 / IAM 14443 / JCM 21226 / LMG 7866 / NBRC 102419 / NCTC 12128 / CDC 0568-73) protein is Nucleoid-associated protein YejK.